A 424-amino-acid chain; its full sequence is Histidine--tRNA ligase (424 aa).

This sequence belongs to the class-II aminoacyl-tRNA synthetase family. Homodimer.

It is found in the cytoplasm. It carries out the reaction tRNA(His) + L-histidine + ATP = L-histidyl-tRNA(His) + AMP + diphosphate + H(+). This Shewanella frigidimarina (strain NCIMB 400) protein is Histidine--tRNA ligase.